Here is a 43-residue protein sequence, read N- to C-terminus: uncharacterized protein (43 aa).

This is an uncharacterized protein from Escherichia coli (Bacteriophage T4).